We begin with the raw amino-acid sequence, 369 residues long: Aminomethyltransferase (369 aa).

This sequence belongs to the GcvT family. In terms of assembly, the glycine cleavage system is composed of four proteins: P, T, L and H.

It catalyses the reaction N(6)-[(R)-S(8)-aminomethyldihydrolipoyl]-L-lysyl-[protein] + (6S)-5,6,7,8-tetrahydrofolate = N(6)-[(R)-dihydrolipoyl]-L-lysyl-[protein] + (6R)-5,10-methylene-5,6,7,8-tetrahydrofolate + NH4(+). In terms of biological role, the glycine cleavage system catalyzes the degradation of glycine. The polypeptide is Aminomethyltransferase (Synechococcus sp. (strain WH7803)).